A 693-amino-acid polypeptide reads, in one-letter code: Glycine--tRNA ligase beta subunit (693 aa).

This sequence belongs to the class-II aminoacyl-tRNA synthetase family. As to quaternary structure, tetramer of two alpha and two beta subunits.

Its subcellular location is the cytoplasm. The catalysed reaction is tRNA(Gly) + glycine + ATP = glycyl-tRNA(Gly) + AMP + diphosphate. The polypeptide is Glycine--tRNA ligase beta subunit (Vibrio campbellii (strain ATCC BAA-1116)).